Reading from the N-terminus, the 154-residue chain is Transcriptional repressor NrdR (154 aa).

The segment at 3 to 34 (CPYCRHPDSRVVDSREADDGQLIRRRRSCPEC) is a zinc-finger region. An ATP-cone domain is found at 46-136 (LAVVKRSGVT…VYRSFESLAD (91 aa)).

This sequence belongs to the NrdR family. Zn(2+) serves as cofactor.

Negatively regulates transcription of bacterial ribonucleotide reductase nrd genes and operons by binding to NrdR-boxes. The chain is Transcriptional repressor NrdR from Salinispora arenicola (strain CNS-205).